A 575-amino-acid polypeptide reads, in one-letter code: Hemagglutinin-neuraminidase (575 aa).

Over residues 1–10 (MDGDRSKRDS) the composition is skewed to basic and acidic residues. Positions 1 to 25 (MDGDRSKRDSYWSTSPGGSTTKLVS) are disordered. The Intravirion segment spans residues 1 to 37 (MDGDRSKRDSYWSTSPGGSTTKLVSDSERSGKVDTWL). An incorporation in virion region spans residues 10–14 (SYWST). A compositionally biased stretch (polar residues) spans 11–24 (YWSTSPGGSTTKLV). Residues 38–58 (LILAFTQWALSIATVIICIVI) form a helical membrane-spanning segment. The involved in interaction with F protein stretch occupies residues 59 to 140 (AARQGYSMER…RQELTQLCDS (82 aa)). Residues 59 to 575 (AARQGYSMER…SIPKLCKAES (517 aa)) are Virion surface-facing. An N-linked (GlcNAc...) asparagine; by host glycan is attached at N77. Disulfide bonds link C192–C216, C258–C271, C357–C469, and C463–C473. Positions 254-259 (NRKSCS) are involved in neuraminidase activity. N-linked (GlcNAc...) asparagine; by host glycosylation is found at N499 and N511. A disulfide bridge links C535 with C544.

Belongs to the paramyxoviruses hemagglutinin-neuraminidase family. As to quaternary structure, homotetramer; composed of disulfide-linked homodimers. Interacts with F protein trimer. In terms of processing, N-glycosylated; glycans consist of a mixture of high mannose-type oligosaccharides and of complex-type oligosaccharides.

The protein resides in the virion membrane. Its subcellular location is the host cell membrane. It carries out the reaction Hydrolysis of alpha-(2-&gt;3)-, alpha-(2-&gt;6)-, alpha-(2-&gt;8)- glycosidic linkages of terminal sialic acid residues in oligosaccharides, glycoproteins, glycolipids, colominic acid and synthetic substrates.. In terms of biological role, attaches the virus to sialic acid-containing cell receptors and thereby initiating infection. Binding of HN protein to the receptor induces a conformational change that allows the F protein to trigger virion/cell membranes fusion. Its function is as follows. Neuraminidase activity ensures the efficient spread of the virus by dissociating the mature virions from the neuraminic acid containing glycoproteins. The polypeptide is Hemagglutinin-neuraminidase (HN) (Cavia cutleri (Guinea pig)).